The following is a 100-amino-acid chain: Large ribosomal subunit protein uL23 (100 aa).

Belongs to the universal ribosomal protein uL23 family. In terms of assembly, part of the 50S ribosomal subunit. Contacts protein L29, and trigger factor when it is bound to the ribosome.

Functionally, one of the early assembly proteins it binds 23S rRNA. One of the proteins that surrounds the polypeptide exit tunnel on the outside of the ribosome. Forms the main docking site for trigger factor binding to the ribosome. The sequence is that of Large ribosomal subunit protein uL23 from Bradyrhizobium diazoefficiens (strain JCM 10833 / BCRC 13528 / IAM 13628 / NBRC 14792 / USDA 110).